The sequence spans 483 residues: Probable glycine dehydrogenase (decarboxylating) subunit 2 (483 aa).

Lys267 is modified (N6-(pyridoxal phosphate)lysine).

This sequence belongs to the GcvP family. C-terminal subunit subfamily. The glycine cleavage system is composed of four proteins: P, T, L and H. In this organism, the P 'protein' is a heterodimer of two subunits. It depends on pyridoxal 5'-phosphate as a cofactor.

It catalyses the reaction N(6)-[(R)-lipoyl]-L-lysyl-[glycine-cleavage complex H protein] + glycine + H(+) = N(6)-[(R)-S(8)-aminomethyldihydrolipoyl]-L-lysyl-[glycine-cleavage complex H protein] + CO2. In terms of biological role, the glycine cleavage system catalyzes the degradation of glycine. The P protein binds the alpha-amino group of glycine through its pyridoxal phosphate cofactor; CO(2) is released and the remaining methylamine moiety is then transferred to the lipoamide cofactor of the H protein. The polypeptide is Probable glycine dehydrogenase (decarboxylating) subunit 2 (Kosmotoga olearia (strain ATCC BAA-1733 / DSM 21960 / TBF 19.5.1)).